We begin with the raw amino-acid sequence, 239 residues long: Biosynthetic peptidoglycan transglycosylase (239 aa).

The helical transmembrane segment at 29–49 threads the bilayer; it reads GMFGLGALMLVWIVAYAVVPV.

This sequence belongs to the glycosyltransferase 51 family.

It localises to the cell inner membrane. The catalysed reaction is [GlcNAc-(1-&gt;4)-Mur2Ac(oyl-L-Ala-gamma-D-Glu-L-Lys-D-Ala-D-Ala)](n)-di-trans,octa-cis-undecaprenyl diphosphate + beta-D-GlcNAc-(1-&gt;4)-Mur2Ac(oyl-L-Ala-gamma-D-Glu-L-Lys-D-Ala-D-Ala)-di-trans,octa-cis-undecaprenyl diphosphate = [GlcNAc-(1-&gt;4)-Mur2Ac(oyl-L-Ala-gamma-D-Glu-L-Lys-D-Ala-D-Ala)](n+1)-di-trans,octa-cis-undecaprenyl diphosphate + di-trans,octa-cis-undecaprenyl diphosphate + H(+). It participates in cell wall biogenesis; peptidoglycan biosynthesis. Functionally, peptidoglycan polymerase that catalyzes glycan chain elongation from lipid-linked precursors. This is Biosynthetic peptidoglycan transglycosylase from Jannaschia sp. (strain CCS1).